Here is a 407-residue protein sequence, read N- to C-terminus: uncharacterized protein (407 aa).

This sequence belongs to the peptidase U32 family.

This is an uncharacterized protein from Methanocaldococcus jannaschii (strain ATCC 43067 / DSM 2661 / JAL-1 / JCM 10045 / NBRC 100440) (Methanococcus jannaschii).